Here is a 314-residue protein sequence, read N- to C-terminus: MPDMKLFAGNATPELAQRIADRLYISLGDATVSRFSDGEVAVQINENVRGSDVFIIQSTCAPTNDNLMELVVMIDAMRRASAGRITAVIPYFGYARQDRRVRSARVPITAKVVADFLSNVGVDRVLTIDLHAEQIQGFFDVPVDNIFGTPVLLEDMHARGLEDPVVVSPDLGGVVRARATAKALGDIDIAIVDKRRPRANVSEVMNLIGDVEGRDCVIVDDMIDTGGTLCKAAEALKERGAKRVFAYATHAVFSGNAAKNIKNSVLDQVIVTDSITLSKEMAATGKVTQLTLSGMLAEAIRRISNEESISAMFN.

Residues 37–39 and 96–97 contribute to the ATP site; these read DGE and RQ. The Mg(2+) site is built by His131 and Asp170. Lys194 is an active-site residue. Residues Arg196, Asp220, and 224-228 each bind D-ribose 5-phosphate; that span reads DTGGT.

Belongs to the ribose-phosphate pyrophosphokinase family. Class I subfamily. Homohexamer. The cofactor is Mg(2+).

It is found in the cytoplasm. The catalysed reaction is D-ribose 5-phosphate + ATP = 5-phospho-alpha-D-ribose 1-diphosphate + AMP + H(+). It participates in metabolic intermediate biosynthesis; 5-phospho-alpha-D-ribose 1-diphosphate biosynthesis; 5-phospho-alpha-D-ribose 1-diphosphate from D-ribose 5-phosphate (route I): step 1/1. Involved in the biosynthesis of the central metabolite phospho-alpha-D-ribosyl-1-pyrophosphate (PRPP) via the transfer of pyrophosphoryl group from ATP to 1-hydroxyl of ribose-5-phosphate (Rib-5-P). This is Ribose-phosphate pyrophosphokinase from Vibrio vulnificus (strain CMCP6).